We begin with the raw amino-acid sequence, 316 residues long: Aspartate carbamoyltransferase catalytic subunit (316 aa).

2 residues coordinate carbamoyl phosphate: R59 and T60. K88 contacts L-aspartate. Carbamoyl phosphate is bound by residues R109, H137, and Q140. Positions 170 and 232 each coordinate L-aspartate. Residues L269 and P270 each contribute to the carbamoyl phosphate site.

Belongs to the aspartate/ornithine carbamoyltransferase superfamily. ATCase family. Heterooligomer of catalytic and regulatory chains.

The enzyme catalyses carbamoyl phosphate + L-aspartate = N-carbamoyl-L-aspartate + phosphate + H(+). The protein operates within pyrimidine metabolism; UMP biosynthesis via de novo pathway; (S)-dihydroorotate from bicarbonate: step 2/3. In terms of biological role, catalyzes the condensation of carbamoyl phosphate and aspartate to form carbamoyl aspartate and inorganic phosphate, the committed step in the de novo pyrimidine nucleotide biosynthesis pathway. The protein is Aspartate carbamoyltransferase catalytic subunit of Methanobrevibacter smithii (strain ATCC 35061 / DSM 861 / OCM 144 / PS).